A 141-amino-acid chain; its full sequence is Transcription antitermination protein NusB (141 aa).

Belongs to the NusB family.

Its function is as follows. Involved in transcription antitermination. Required for transcription of ribosomal RNA (rRNA) genes. Binds specifically to the boxA antiterminator sequence of the ribosomal RNA (rrn) operons. The chain is Transcription antitermination protein NusB from Clostridium botulinum (strain Loch Maree / Type A3).